Reading from the N-terminus, the 390-residue chain is S-adenosylmethionine synthase 1 (390 aa).

Glu9 contributes to the Mg(2+) binding site. His15 provides a ligand contact to ATP. Glu43 serves as a coordination point for K(+). The L-methionine site is built by Glu56 and Gln99. ATP-binding positions include 167-169, 235-238, Asp246, 252-253, Ala269, Lys273, and Lys277; these read DGK, SGRF, and RK. An L-methionine-binding site is contributed by Asp246. Lys277 provides a ligand contact to L-methionine.

The protein belongs to the AdoMet synthase family. Homotetramer. It depends on Mn(2+) as a cofactor. Mg(2+) serves as cofactor. Requires Co(2+) as cofactor. The cofactor is K(+).

It localises to the cytoplasm. It catalyses the reaction L-methionine + ATP + H2O = S-adenosyl-L-methionine + phosphate + diphosphate. It functions in the pathway amino-acid biosynthesis; S-adenosyl-L-methionine biosynthesis; S-adenosyl-L-methionine from L-methionine: step 1/1. Its function is as follows. Catalyzes the formation of S-adenosylmethionine from methionine and ATP. The reaction comprises two steps that are both catalyzed by the same enzyme: formation of S-adenosylmethionine (AdoMet) and triphosphate, and subsequent hydrolysis of the triphosphate. The chain is S-adenosylmethionine synthase 1 (SAM1) from Petunia hybrida (Petunia).